Here is a 597-residue protein sequence, read N- to C-terminus: Aspartate--tRNA(Asp/Asn) ligase (597 aa).

E175 contributes to the L-aspartate binding site. An aspartate region spans residues 199-202 (QLFK). Position 221 (R221) interacts with L-aspartate. Residues 221-223 (RDE) and Q230 each bind ATP. Position 453 (H453) interacts with L-aspartate. E487 contributes to the ATP binding site. Residue R494 coordinates L-aspartate. Residue 539 to 542 (GWDR) coordinates ATP. Residues 562-597 (SGGGVDPLTDAPAPITPEQRKESGIDAKPKKKETKN) are disordered. Over residues 579-589 (EQRKESGIDAK) the composition is skewed to basic and acidic residues.

This sequence belongs to the class-II aminoacyl-tRNA synthetase family. Type 1 subfamily. As to quaternary structure, homodimer.

The protein resides in the cytoplasm. The enzyme catalyses tRNA(Asx) + L-aspartate + ATP = L-aspartyl-tRNA(Asx) + AMP + diphosphate. Aspartyl-tRNA synthetase with relaxed tRNA specificity since it is able to aspartylate not only its cognate tRNA(Asp) but also tRNA(Asn). Reaction proceeds in two steps: L-aspartate is first activated by ATP to form Asp-AMP and then transferred to the acceptor end of tRNA(Asp/Asn). In Corynebacterium kroppenstedtii (strain DSM 44385 / JCM 11950 / CIP 105744 / CCUG 35717), this protein is Aspartate--tRNA(Asp/Asn) ligase.